Reading from the N-terminus, the 233-residue chain is Antiholin-like protein LrgB (233 aa).

The next 7 helical transmembrane spans lie at 9–29 (TPYF…ILFE), 34–54 (FFLF…LYLT), 63–83 (IGGD…AIPL), 97–117 (IIGG…TFAK), 121–141 (FAND…IALP), 144–164 (AGIG…GVII), and 212–232 (IALV…VAIF).

Belongs to the CidB/LrgB family. LrgB subfamily.

Its subcellular location is the cell membrane. Inhibits the expression or activity of extracellular murein hydrolases by interacting, possibly with LrgA, with the holin-like proteins CidA and/or CidB. The LrgAB and CidAB proteins may affect the proton motive force of the membrane. May be involved in programmed cell death (PCD), possibly triggering PCD in response to antibiotics and environmental stresses. The sequence is that of Antiholin-like protein LrgB from Staphylococcus aureus (strain Mu3 / ATCC 700698).